We begin with the raw amino-acid sequence, 269 residues long: Probable ribosomal RNA small subunit methyltransferase A (269 aa).

Positions 19, 21, 46, 67, 92, and 107 each coordinate S-adenosyl-L-methionine.

This sequence belongs to the class I-like SAM-binding methyltransferase superfamily. rRNA adenine N(6)-methyltransferase family. RsmA subfamily.

The protein localises to the cytoplasm. Functionally, specifically dimethylates two adjacent adenosines in the loop of a conserved hairpin near the 3'-end of 16S rRNA in the 30S particle. May play a critical role in biogenesis of 30S subunits. The sequence is that of Probable ribosomal RNA small subunit methyltransferase A from Methanosarcina acetivorans (strain ATCC 35395 / DSM 2834 / JCM 12185 / C2A).